Consider the following 329-residue polypeptide: uncharacterized protein (329 aa).

Residues 56–247 are a coiled coil; the sequence is LNKEEQFQED…EAEKTHQAKL (192 aa).

This is an uncharacterized protein from Bos taurus (Bovine).